Reading from the N-terminus, the 428-residue chain is MEITVSEIQVESKDETRSAEVRPQDERQEEKASMLCFKRRKKAAKAMKPKASSKAADAAKKCPPEARASDQPQRPGGAWDSIKRLVTRRKRSESSKQQKPFKAKLQSEINAEDANPSKKKAKSRLKIPCIKFSKGEKRSNHSKIIEDSDRSVKVQEAENLVTKTQTQSDDQATKSKSPQDVREDVSQKGDDEVCESNVNNSITSPGEKVISVELELDMGHSAIQRGTLILEKDTEMLEEKQSIQPQHVSPLEASDTEQELPVGSEVPPSSAVPDQQILEEARNGVLESGPDWKEHESREIVVEESKPKDTELSQELDFQENEITAEKPKPEESKRMEPIAIIITDTEISEFDVKKSKNVPKPFLISIENEQVGVFANDSGFEGRTSEQYETLLIETASSLVKNAIQLSIEQLVNEMASDDNTINNRLQ.

An essential to the intracellular anchoring function region spans residues 1–170; it reads MEITVSEIQV…VTKTQTQSDD (170 aa). Disordered regions lie at residues 1–207 and 237–313; these read MEIT…SPGE and LEEK…TELS. The segment covering 10 to 32 has biased composition (basic and acidic residues); the sequence is VESKDETRSAEVRPQDERQEEKA. Cys-36 is lipidated: S-palmitoyl cysteine. Residues 37-48 show a composition bias toward basic residues; that stretch reads FKRRKKAAKAMK. Basic and acidic residues predominate over residues 57 to 68; the sequence is DAAKKCPPEARA. The AKAP CaM-binding motif lies at 76 to 96; the sequence is GGAWDSIKRLVTRRKRSESSK. Thr-87 bears the Phosphothreonine; by PKC mark. The residue at position 92 (Ser-92) is a Phosphoserine; by PKA. Phosphoserine; by PKC is present on Ser-94. Cys-129 is lipidated: S-palmitoyl cysteine. The segment covering 133-156 has biased composition (basic and acidic residues); sequence SKGEKRSNHSKIIEDSDRSVKVQE. Positions 161–170 are enriched in polar residues; it reads VTKTQTQSDD. 2 stretches are compositionally biased toward basic and acidic residues: residues 171 to 191 and 290 to 311; these read QATKSKSPQDVREDVSQKGDD and PDWKEHESREIVVEESKPKDTE. The RII-beta subunit binding domain stretch occupies residues 389–410; sequence YETLLIETASSLVKNAIQLSIE. The tract at residues 411-428 is tethers NFATC2 to CRAC channels; the sequence is QLVNEMASDDNTINNRLQ.

In terms of assembly, binding protein for dimer of the RII-beta regulatory subunit of cAMP-dependent protein kinase (PKA) and also for the protein kinase C (PKC) and the phosphatase calcineurin (PP2B). Each enzyme is inhibited when bound to the anchoring protein. Also binds the beta2-adrenergic receptor. Part of a complex containing AKAP5, ADCY5, ADCY6 and PDE4C. Interacts with ADCY8, and enhances its phosphorylation at lipid rafts. Interacts with ORAI1 (isoform alpha) (via N-terminus) upon store depletion and in response to LTC4. Does not interact with ORAI2 and ORAI3 paralogs. Interacts (via leucine zipper domain) with NFATC2/NFAT1. Interacts with calmodulin; the interaction is calcium-independent. Interacts with KCNQ2; the interaction may help KCNQ2 channel complex to retain calcium-bound calmodulin. In terms of processing, palmitoylated. Palmitoylation at Cys-36 and Cys-129 play a key role in the targeting of AKAP5 to lipid rafts. Palmitoylation by ZDHHC2 is required for AKAP5 function in LTP-stimulated recycling endosome exocytosis. As to expression, predominantly in brain, and to a lesser extent in adrenal medulla, lung and anterior pituitary.

The protein resides in the postsynaptic recycling endosome membrane. In terms of biological role, multivalent scaffold protein that anchors the cAMP-dependent protein kinase/PKA to cytoskeletal and/or organelle-associated proteins, targeting the signal carried by cAMP to specific intracellular effectors. Association with the beta2-adrenergic receptor (beta2-AR) not only regulates beta2-AR signaling pathway, but also the activation by PKA by switching off the beta2-AR signaling cascade. Plays a role in long term synaptic potentiation by regulating protein trafficking from the dendritic recycling endosomes to the plasma membrane and controlling both structural and functional plasticity at excitatory synapses. Associates with ORAI1 pore-forming subunit of CRAC channels in Ca(2+) signaling microdomains where it recruits NFATC2/NFAT1 and couples store-operated Ca(2+) influx to calmodulin and calcineurin signaling and activation of NFAT-dependent transcriptional responses. The polypeptide is A-kinase anchor protein 5 (AKAP5) (Bos taurus (Bovine)).